The primary structure comprises 132 residues: Ribosome-binding factor A (132 aa).

This sequence belongs to the RbfA family. In terms of assembly, monomer. Binds 30S ribosomal subunits, but not 50S ribosomal subunits or 70S ribosomes.

Its subcellular location is the cytoplasm. One of several proteins that assist in the late maturation steps of the functional core of the 30S ribosomal subunit. Associates with free 30S ribosomal subunits (but not with 30S subunits that are part of 70S ribosomes or polysomes). Required for efficient processing of 16S rRNA. May interact with the 5'-terminal helix region of 16S rRNA. The sequence is that of Ribosome-binding factor A from Prochlorococcus marinus subsp. pastoris (strain CCMP1986 / NIES-2087 / MED4).